The sequence spans 3625 residues: Cubilin (3625 aa).

The N-terminal stretch at 1–20 is a signal peptide; the sequence is MVNNMSLLFLWSLVIFLTFA. Positions 21-36 are cleaved as a propeptide — removed in mature form; that stretch reads ESYGEAGGPELQRHKR. The tract at residues 43 to 50 is interaction with AMN; that stretch reads PRMAAERG. N106 carries an N-linked (GlcNAc...) asparagine glycan. The EGF-like 1 domain occupies 133 to 169; it reads DGKVCSSNPCQNGATCLNLHDSFFCICPSQWKGPLCS. Intrachain disulfides connect C137–C148, C142–C157, C159–C168, C175–C191, C185–C200, and C202–C211. Positions 171-212 constitute an EGF-like 2; calcium-binding domain; that stretch reads DVNECEIYSGTPLGCQNGATCINTPGSYSCLCSPETHGPQCA. The N-linked (GlcNAc...) asparagine glycan is linked to N257. The 42-residue stretch at 264-305 folds into the EGF-like 3; calcium-binding domain; sequence DRDECSSWPAPCSALVPCFNTLGSFYCGACPTGWQGNGYICE. 20 disulfide bridges follow: C268-C281, C275-C290, C293-C304, C310-C325, C317-C334, C337-C348, C354-C367, C361-C377, C379-C393, C400-C410, C405-C419, C421-C430, C437-C448, C442-C457, C459-C468, C475-C501, C528-C550, C591-C617, C644-C666, and C709-C734. One can recognise an EGF-like 4; calcium-binding domain in the interval 306 to 349; it reads DINECEINNGGCSVAPPVECVNTPGSYYCPSCPPGYQGDGRMCT. 2 consecutive EGF-like domains span residues 350–394 and 396–431; these read LIDL…HGCV and LSNV…MNCT. N-linked (GlcNAc...) asparagine glycosylation is present at N429. The EGF-like 7; calcium-binding domain occupies 433 to 469; that stretch reads NINECLSNPCLNGGTCVDGINAFSCECTRFWTGSLCH. 27 CUB domains span residues 475–587, 591–703, 709–816, 817–928, 932–1042, 1045–1163, 1167–1279, 1280–1391, 1393–1508, 1512–1621, 1622–1736, 1740–1852, 1854–1965, 1980–2093, 2094–2215, 2219–2336, 2338–2450, 2454–2567, 2572–2689, 2691–2803, 2807–2921, 2922–3037, 3039–3152, 3159–3276, 3280–3397, 3397–3509, and 3513–3625; these read CGGT…WETR, CGGV…YLTT, CGGN…YQVA, CGGE…FSTE, CGEI…YEAT, SAGN…WDGS, CGGN…YQQT, CDNV…WLVH, CGGE…WRAV, CGGI…FRQA, CGGH…YVAS, CGGI…FNNI, GNDH…WFAM, CGGF…FHKS, CGGY…YEAK, CGGN…YSIA, CGGT…FDSS, CGGD…YTSS, CGGS…YSFT, CGGI…WNTE, CGGI…FLSR, CGRN…YRIT, CGGT…FRET, CGGY…YTLL, CGGT…IAGC, CSRE…WTSS, and CGGT…TWAS. Residues N712 and N749 are each glycosylated (N-linked (GlcNAc...) asparagine). Residues C761 and C779 are joined by a disulfide bond. A glycan (N-linked (GlcNAc...) asparagine) is linked at N781. C817 and C842 form a disulfide bridge. The N-linked (GlcNAc...) asparagine glycan is linked to N857. 2 cysteine pairs are disulfide-bonded: C869-C891 and C932-C958. An N-linked (GlcNAc...) asparagine glycan is attached at N957. E980 provides a ligand contact to Ca(2+). A glycan (N-linked (GlcNAc...) asparagine) is linked at N984. A disulfide bond links C985 and C1005. Residues D988, D1027, D1029, and L1030 each coordinate Ca(2+). N1048 carries an N-linked (GlcNAc...) asparagine glycan. The Ca(2+) site is built by E1097, D1107, and D1148. An intrachain disulfide couples C1104 to C1126. C1167 and C1193 are joined by a disulfide. Residue N1170 is glycosylated (N-linked (GlcNAc...) asparagine). Ca(2+) is bound at residue E1215. The N-linked (GlcNAc...) asparagine glycan is linked to N1219. Cysteines 1220 and 1242 form a disulfide. Ca(2+)-binding residues include D1223, D1264, G1266, and Q1267. C1280 and C1308 are joined by a disulfide. 3 N-linked (GlcNAc...) asparagine glycosylation sites follow: N1287, N1309, and N1321. E1330 provides a ligand contact to Ca(2+). The N-linked (GlcNAc...) asparagine glycan is linked to N1334. The cysteines at positions 1335 and 1353 are disulfide-linked. Positions 1338, 1375, and 1377 each coordinate Ca(2+). Disulfide bonds link C1393–C1419 and C1446–C1468. Residue N1502 is glycosylated (N-linked (GlcNAc...) asparagine). A disulfide bridge links C1512 with C1538. The N-linked (GlcNAc...) asparagine glycan is linked to N1553. Disulfide bonds link C1565/C1583, C1622/C1649, C1677/C1699, C1740/C1766, and C1793/C1814. Residue N1648 is glycosylated (N-linked (GlcNAc...) asparagine). N-linked (GlcNAc...) asparagine glycans are attached at residues N1804, N1821, and N1887. 3 disulfides stabilise this stretch: C1907–C1929, C1980–C2008, and C2034–C2056. 2 N-linked (GlcNAc...) asparagine glycosylation sites follow: N2087 and N2119. 2 disulfide bridges follow: C2094–C2120 and C2219–C2249. N-linked (GlcNAc...) asparagine glycosylation is present at N2276. 2 disulfide bridges follow: C2277-C2299 and C2338-C2365. Residues N2388 and N2402 are each glycosylated (N-linked (GlcNAc...) asparagine). Disulfide bonds link C2392-C2413, C2454-C2480, and C2507-C2529. N2533, N2583, N2594, and N2612 each carry an N-linked (GlcNAc...) asparagine glycan. A disulfide bridge links C2572 with C2601. Disulfide bonds link C2630–C2651, C2691–C2717, C2744–C2766, C2807–C2833, and C2862–C2885. N2887, N2925, N2928, and N2947 each carry an N-linked (GlcNAc...) asparagine glycan. 2 disulfide bridges follow: C2922–C2948 and C2979–C3001. T3010 carries the phosphothreonine modification. 2 disulfide bridges follow: C3039/C3066 and C3093/C3115. N-linked (GlcNAc...) asparagine glycosylation is found at N3044, N3105, and N3127. Cystine bridges form between C3159/C3187 and C3217/C3239. N3270 and N3285 each carry an N-linked (GlcNAc...) asparagine glycan. 2 disulfides stabilise this stretch: C3280-C3308 and C3334-C3356. N-linked (GlcNAc...) asparagine glycosylation occurs at N3359. C3397 and C3423 are disulfide-bonded. N-linked (GlcNAc...) asparagine glycosylation is found at N3432, N3459, and N3535. Disulfide bonds link C3450–C3472, C3513–C3539, and C3566–C3588.

Interacts with AMN. Component of the cubam complex composed of one CUBN trimer and one AMN chain. The cubam complex can dimerize. Interacts with LRP2 in a dual-receptor complex in a calcium-dependent manner. Found in a complex with PID1/PCLI1, LRP1 and CUBNI. Interacts with LRP1 and PID1/PCLI1. In terms of processing, the precursor is cleaved by a trans-Golgi proteinase furin, removing a propeptide. N-glycosylated. In terms of tissue distribution, detected in kidney cortex (at protein level).

The protein resides in the apical cell membrane. It is found in the cell membrane. The protein localises to the membrane. Its subcellular location is the coated pit. It localises to the endosome. The protein resides in the lysosome membrane. Its function is as follows. Endocytic receptor which plays a role in lipoprotein, vitamin and iron metabolism by facilitating their uptake. Acts together with LRP2 to mediate endocytosis of high-density lipoproteins, GC, hemoglobin, ALB, TF and SCGB1A1. Acts together with AMN to mediate endocytosis of the CBLIF-cobalamin complex. Binds to ALB, MB, Kappa and lambda-light chains, TF, hemoglobin, GC, SCGB1A1, APOA1, high density lipoprotein, and the CBLIF-cobalamin complex. Ligand binding requires calcium. Serves as important transporter in several absorptive epithelia, including intestine, renal proximal tubules and embryonic yolk sac. May play an important role in the development of the peri-implantation embryo through internalization of APOA1 and cholesterol. Binds to LGALS3 at the maternal-fetal interface. This Sus scrofa (Pig) protein is Cubilin (CUBN).